The following is a 198-amino-acid chain: MNLRPMPATTVSAQARPTPKSVTVFCGAMPGRGTKYGQLAEGMGRAIARSKLRLVYGGARVGLMGTLANAALDSGGTVVGVIPESFTAIPEAAHHGLTELHVVHDMHQRKALMAELGDAFIALPGGVGTAEEFFEVLTWSHLGLHNKPCVLLNDNEYYRPLLSYIEHAAVEGFITPATRSRVIVCKDIEGAIAAIRSP.

Residues Glu91, 109 to 110, 126 to 132, and Thr138 each bind substrate; these read RK and GVGTAEE.

The protein belongs to the LOG family.

It catalyses the reaction N(6)-(dimethylallyl)adenosine 5'-phosphate + H2O = N(6)-dimethylallyladenine + D-ribose 5-phosphate. The catalysed reaction is 9-ribosyl-trans-zeatin 5'-phosphate + H2O = trans-zeatin + D-ribose 5-phosphate. Functionally, catalyzes the hydrolytic removal of ribose 5'-monophosphate from nitrogen N6-modified adenosines, the final step of bioactive cytokinin synthesis. The chain is Cytokinin riboside 5'-monophosphate phosphoribohydrolase (fas6) from Rhodococcoides fascians (Rhodococcus fascians).